The sequence spans 384 residues: Mannitol-1-phosphate 5-dehydrogenase (384 aa).

3-14 (AVHFGAGNIGRG) lines the NAD(+) pocket.

This sequence belongs to the mannitol dehydrogenase family. Monomer.

The enzyme catalyses D-mannitol 1-phosphate + NAD(+) = beta-D-fructose 6-phosphate + NADH + H(+). This chain is Mannitol-1-phosphate 5-dehydrogenase (mtlD), found in Enterococcus faecalis (strain ATCC 700802 / V583).